The following is a 279-amino-acid chain: Undecaprenyl-diphosphatase (279 aa).

8 helical membrane-spanning segments follow: residues 2 to 22 (LIIE…TEWL), 44 to 64 (AFIE…VMLI), 85 to 105 (WQLW…AVPL), 113 to 133 (FYFM…FIWI), 163 to 183 (VLSI…AIIL), 188 to 208 (TVAA…YSGL), 223 to 243 (AQVL…LLAI), and 255 to 275 (FTIF…YSFF).

Belongs to the UppP family.

It localises to the cell membrane. The catalysed reaction is di-trans,octa-cis-undecaprenyl diphosphate + H2O = di-trans,octa-cis-undecaprenyl phosphate + phosphate + H(+). In terms of biological role, catalyzes the dephosphorylation of undecaprenyl diphosphate (UPP). Confers resistance to bacitracin. This Streptococcus pyogenes serotype M2 (strain MGAS10270) protein is Undecaprenyl-diphosphatase.